Here is a 572-residue protein sequence, read N- to C-terminus: Probable inactive glycosyltransferase 25 family member 3 (572 aa).

Residues Asn52, Asn130, Asn214, and Asn337 are each glycosylated (N-linked (GlcNAc...) asparagine). The short motif at 569–572 is the Prevents secretion from ER element; that stretch reads RDEL.

Belongs to the glycosyltransferase 25 family.

The protein resides in the endoplasmic reticulum lumen. Probable cell adhesion protein involved in leukocyte transmigration across the blood-brain barrier. Does not express any beta-galactosyltransferase activity in vitro. The sequence is that of Probable inactive glycosyltransferase 25 family member 3 (Cercam) from Rattus norvegicus (Rat).